A 533-amino-acid polypeptide reads, in one-letter code: ATP synthase F(1) complex catalytic subunit beta, mitochondrial (533 aa).

A mitochondrion-targeting transit peptide spans 1–53; it reads MLGLAGRCSAAAASAARPALRRAAGPSHGFLPLLLSRGAGPAAAVGARRDHAA. Gly214, Val215, Gly216, Lys217, Thr218, and Val219 together coordinate ADP. Gly214 is an ATP binding site. 5 residues coordinate phosphate: Gly214, Val215, Gly216, Lys217, and Thr218. 4 residues coordinate ATP: Gly216, Lys217, Thr218, and Val219. Residue Thr218 participates in Mg(2+) binding. A Mg(2+)-binding site is contributed by Glu243. Arg244 contributes to the ATP binding site.

Homotrimer. Component of the ATP synthase complex composed at least of ATP5F1A/subunit alpha, ATP5F1B/subunit beta, ATP5MC1/subunit c (homooctomer), MT-ATP6/subunit a, MT-ATP8/subunit 8, ATP5ME/subunit e, ATP5MF/subunit f, ATP5MG/subunit g, ATP5MK/subunit k, ATP5MJ/subunit j, ATP5F1C/subunit gamma, ATP5F1D/subunit delta, ATP5F1E/subunit epsilon, ATP5PF/subunit F6, ATP5PB/subunit b, ATP5PD/subunit d, ATP5PO/subunit OSCP. ATP synthase complex consists of a soluble F(1) head domain (subunits alpha(3) and beta(3)) - the catalytic core - and a membrane F(0) domain - the membrane proton channel (subunits c, a, 8, e, f, g, k and j). These two domains are linked by a central stalk (subunits gamma, delta, and epsilon) rotating inside the F1 region and a stationary peripheral stalk (subunits F6, b, d, and OSCP).

Its subcellular location is the mitochondrion inner membrane. It catalyses the reaction ATP + H2O + 4 H(+)(in) = ADP + phosphate + 5 H(+)(out). Functionally, catalytic subunit beta, of the mitochondrial membrane ATP synthase complex (F(1)F(0) ATP synthase or Complex V) that produces ATP from ADP in the presence of a proton gradient across the membrane which is generated by electron transport complexes of the respiratory chain. ATP synthase complex consist of a soluble F(1) head domain - the catalytic core - and a membrane F(1) domain - the membrane proton channel. These two domains are linked by a central stalk rotating inside the F(1) region and a stationary peripheral stalk. During catalysis, ATP synthesis in the catalytic domain of F(1) is coupled via a rotary mechanism of the central stalk subunits to proton translocation. In vivo, can only synthesize ATP although its ATP hydrolase activity can be activated artificially in vitro. With the subunit alpha (ATP5F1A), forms the catalytic core in the F(1) domain. This chain is ATP synthase F(1) complex catalytic subunit beta, mitochondrial, found in Gallus gallus (Chicken).